We begin with the raw amino-acid sequence, 441 residues long: MSNILDIKILRVSSMIDKKILFEEVILDNLEIAKKAKVINRDIEIKLIPNKIKVIYGVRRGGKTYFLFQIINKHFKDDFIYINFEDERLINIALDELNELLKIALSIKNTKNLFFDEIQSVDNWDKFVRRLNDSGFNIFITGSSSKLLSKEIATSLRGRNLKTEILPLNFKEFLKFKNFNVKKRYSTIEKAELLKYLNEFIKFGGFPEITLIDDENIKKEILKEYLDGIFYRDVVERHSIRNIKEIKVLRNILINLFANEISIKKIANLLKEFNTKISRECIYNYLEYFSDAYLIFLLNNFSYKTKTISYSKLYVIDGMWNFSLSFSKNKGRILENLVFLELRRRGFVENENLFYVKRKNYEVDFLIFGENKELIQVCYELNETNKEREIKAYEKAIKDLKLDNVNLKIITYNDEGFEKITVDDKEHLIEIVPFWKWSLTY.

57 to 64 serves as a coordination point for ATP; that stretch reads GVRRGGKT.

This is an uncharacterized protein from Methanocaldococcus jannaschii (strain ATCC 43067 / DSM 2661 / JAL-1 / JCM 10045 / NBRC 100440) (Methanococcus jannaschii).